Here is a 356-residue protein sequence, read N- to C-terminus: Thrombomodulin (356 aa).

Over 1-296 the chain is Extracellular; that stretch reads RGARGETEGR…SPAPAGPLHS (296 aa). EGF-like domains are found at residues 17–57 and 60–98; these read GAWA…RSCG and AEHP…HRCE. 18 disulfide bridges follow: cysteine 21–cysteine 32, cysteine 28–cysteine 41, cysteine 43–cysteine 56, cysteine 64–cysteine 72, cysteine 68–cysteine 82, cysteine 84–cysteine 97, cysteine 103–cysteine 114, cysteine 110–cysteine 123, cysteine 125–cysteine 136, cysteine 143–cysteine 152, cysteine 148–cysteine 162, cysteine 164–cysteine 178, cysteine 182–cysteine 191, cysteine 187–cysteine 199, cysteine 201–cysteine 213, cysteine 219–cysteine 228, cysteine 224–cysteine 237, and cysteine 239–cysteine 253. An EGF-like 3; calcium-binding domain is found at 99-137; it reads DVDDCAQLPSPCPQRCVNTEGGFQCHCDTGYELVDGECV. 2 EGF-like domains span residues 139-179 and 178-214; these read PVDP…HKCQ and CQMF…STCT. An EGF-like 6; calcium-binding domain is found at 215–254; sequence DINECDTNICPGQCHNLPGTYECICGPDSALSGQIGIDCD. Residues 255–290 are disordered; that stretch reads PTQVNEERGTPEDYGGSGEPPVSPTPGATARPSPAP. A glycan (O-linked (Xyl...) (chondroitin sulfate) serine) is linked at serine 271. Residues 297-320 form a helical membrane-spanning segment; the sequence is GVLVGISIASLSLVVALLALLCHL. The Cytoplasmic segment spans residues 321–356; the sequence is RKKQGASRGELEYKCGVPAKELMLQQVKTERTPQKL.

As to quaternary structure, interacts with ITGAL, ITGAM and ITGB2. Interacts with thrombin/F2; this interaction switches the specificity of thrombin from a procoagulant to an anticoagulant and antifibrinolytic protease. Interacts with ANGP1 and ANGP2; these interactions significantly inhibit the generation of activated PC and TAFIa/CPB2 by the thrombin/thrombomodulin complex. Interacts with PF4; this interaction enhances generation of activated protein C. Interacts with HMGB1; this interaction inhibits HMGB1 inflammatory activity. As to expression, endothelial cells are unique in synthesizing thrombomodulin.

The protein localises to the membrane. In terms of biological role, endothelial cell receptor that plays a critical role in regulating several physiological processes including hemostasis, coagulation, fibrinolysis, inflammation, and angiogenesis. Acts as a cofactor for thrombin activation of protein C/PROC on the surface of vascular endothelial cells leading to initiation of the activated protein C anticoagulant pathway. Also accelerates the activation of the plasma carboxypeptidase B2/CPB2, which catalyzes removal of C-terminal basic amino acids from its substrates including kinins or anaphylatoxins leading to fibrinolysis inhibition. Plays critical protective roles in changing the cleavage specificity of protease-activated receptor 1/PAR1, inhibiting endothelial cell permeability and inflammation. Suppresses inflammation distinctly from its anticoagulant cofactor activity by sequestering HMGB1 thereby preventing it from engaging cellular receptors such as RAGE and contributing to the inflammatory response. This Bos taurus (Bovine) protein is Thrombomodulin (THBD).